Here is a 125-residue protein sequence, read N- to C-terminus: Large ribosomal subunit protein bL12 (125 aa).

The protein belongs to the bacterial ribosomal protein bL12 family. Homodimer. Part of the ribosomal stalk of the 50S ribosomal subunit. Forms a multimeric L10(L12)X complex, where L10 forms an elongated spine to which 2 to 4 L12 dimers bind in a sequential fashion. Binds GTP-bound translation factors.

Its function is as follows. Forms part of the ribosomal stalk which helps the ribosome interact with GTP-bound translation factors. Is thus essential for accurate translation. This chain is Large ribosomal subunit protein bL12, found in Hyphomonas neptunium (strain ATCC 15444).